The sequence spans 159 residues: Ribosome maturation factor RimP (159 aa).

This sequence belongs to the RimP family.

It localises to the cytoplasm. Its function is as follows. Required for maturation of 30S ribosomal subunits. The chain is Ribosome maturation factor RimP from Streptococcus pneumoniae serotype 2 (strain D39 / NCTC 7466).